The chain runs to 290 residues: Ribosomal RNA small subunit methyltransferase A (290 aa).

6 residues coordinate S-adenosyl-L-methionine: Asn27, Leu29, Gly54, Glu75, Asp100, and Asn125.

The protein belongs to the class I-like SAM-binding methyltransferase superfamily. rRNA adenine N(6)-methyltransferase family. RsmA subfamily.

The protein resides in the cytoplasm. It carries out the reaction adenosine(1518)/adenosine(1519) in 16S rRNA + 4 S-adenosyl-L-methionine = N(6)-dimethyladenosine(1518)/N(6)-dimethyladenosine(1519) in 16S rRNA + 4 S-adenosyl-L-homocysteine + 4 H(+). Its function is as follows. Specifically dimethylates two adjacent adenosines (A1518 and A1519) in the loop of a conserved hairpin near the 3'-end of 16S rRNA in the 30S particle. May play a critical role in biogenesis of 30S subunits. The chain is Ribosomal RNA small subunit methyltransferase A from Streptococcus agalactiae serotype V (strain ATCC BAA-611 / 2603 V/R).